The chain runs to 288 residues: POU domain class 2-associating factor 2 (288 aa).

The region spanning 10–32 (KRVYQGVRVKHTVKDLLAEKRSG) is the OCA domain. Disordered regions lie at residues 24-52 (DLLA…PFVQ) and 247-274 (PPKV…VKED). The span at 35–48 (SNSRLNGSVSSSQS) shows a compositional bias: low complexity.

Belongs to the POU2AF family. As to quaternary structure, interacts with POU2F3 (via the POU domain) in a DNA-dependent manner; this interaction recruits POU2AF2 to chromatin and increases POU2F3 transactivation activity. As to expression, expressed in tuft cells of colon mucosa, as well as in small intestine and thymus.

The protein localises to the cytoplasm. The protein resides in the cytosol. It localises to the nucleus. In terms of biological role, transcriptional coactivator of POU2F3. This complex drives the development of tuft cells, a rare chemosensory cells that coordinate immune and neural functions within mucosal epithelial tissues. The chain is POU domain class 2-associating factor 2 from Homo sapiens (Human).